The chain runs to 217 residues: Ras-like protein (217 aa).

17–24 contributes to the GTP binding site; the sequence is GGGGVGKS. Residues 39-47 carry the Effector region motif; sequence YDPTIEDSY. GTP-binding positions include 64–68 and 123–126; these read DTAGQ and NKCD. The interval 181–200 is disordered; it reads TGRMMTGGGGGGPPGTYAGK. Gly residues predominate over residues 185–194; it reads MTGGGGGGPP. 2 S-palmitoyl cysteine lipidation sites follow: Cys-210 and Cys-211. Residue Cys-214 is modified to Cysteine methyl ester. Cys-214 carries the S-geranylgeranyl cysteine lipid modification. A propeptide spans 215–217 (removed in mature form); the sequence is VVL.

Belongs to the small GTPase superfamily. Ras family.

It localises to the cell membrane. It catalyses the reaction GTP + H2O = GDP + phosphate + H(+). With respect to regulation, alternates between an inactive form bound to GDP and an active form bound to GTP. Activated by a guanine nucleotide-exchange factor (GEF) and inactivated by a GTPase-activating protein (GAP). The chain is Ras-like protein from Lentinula edodes (Shiitake mushroom).